The sequence spans 335 residues: Beta-ketoacyl-[acyl-carrier-protein] synthase III 2 (335 aa).

Residues Cys-116 and His-256 contribute to the active site. Residues 257–261 (QANVR) are ACP-binding. Asn-286 is a catalytic residue.

The protein belongs to the thiolase-like superfamily. FabH family. In terms of assembly, homodimer.

Its subcellular location is the cytoplasm. It catalyses the reaction malonyl-[ACP] + acetyl-CoA + H(+) = 3-oxobutanoyl-[ACP] + CO2 + CoA. The protein operates within lipid metabolism; fatty acid biosynthesis. In terms of biological role, catalyzes the condensation reaction of fatty acid synthesis by the addition to an acyl acceptor of two carbons from malonyl-ACP. Catalyzes the first condensation reaction which initiates fatty acid synthesis and may therefore play a role in governing the total rate of fatty acid production. Possesses both acetoacetyl-ACP synthase and acetyl transacylase activities. Its substrate specificity determines the biosynthesis of branched-chain and/or straight-chain of fatty acids. The polypeptide is Beta-ketoacyl-[acyl-carrier-protein] synthase III 2 (Bacteroides thetaiotaomicron (strain ATCC 29148 / DSM 2079 / JCM 5827 / CCUG 10774 / NCTC 10582 / VPI-5482 / E50)).